A 64-amino-acid polypeptide reads, in one-letter code: MFNGEEVILFPERKTIPGAPGREIHKDAPAPKRPETKKTGDRLMDRMKKVDPNQSERYRQRTGE.

Positions 1–64 are disordered; sequence MFNGEEVILF…SERYRQRTGE (64 aa). Basic and acidic residues predominate over residues 22-64; that stretch reads REIHKDAPAPKRPETKKTGDRLMDRMKKVDPNQSERYRQRTGE. Residue E64 forms an Isoglutamyl lysine isopeptide (Glu-Lys) (interchain with K-? in acceptor proteins) linkage.

It belongs to the ubiquitin-like protein UBact family.

Its function is as follows. May function as a protein modifier covalently attached to lysine residues of substrate proteins. This may serve to target the modified proteins for degradation by proteasomes. This is Prokaryotic ubiquitin-like protein UBact from Leptospirillum ferriphilum (strain ML-04).